The sequence spans 303 residues: Haloalkane dehalogenase (303 aa).

The 145-residue stretch at 48–192 folds into the AB hydrolase-1 domain; sequence PVLLLHGEPS…GTVTKLSQAV (145 aa). Aspartate 123 (nucleophile) is an active-site residue. The Proton donor role is filled by aspartate 250. The active-site Proton acceptor is histidine 280.

This sequence belongs to the haloalkane dehalogenase family. Type 1 subfamily. As to quaternary structure, monomer.

It carries out the reaction 1-haloalkane + H2O = a halide anion + a primary alcohol + H(+). Catalyzes hydrolytic cleavage of carbon-halogen bonds in halogenated aliphatic compounds, leading to the formation of the corresponding primary alcohols, halide ions and protons. This Psychrobacter cryohalolentis (strain ATCC BAA-1226 / DSM 17306 / VKM B-2378 / K5) protein is Haloalkane dehalogenase.